An 810-amino-acid polypeptide reads, in one-letter code: Capsid protein VP1 (810 aa).

Disordered regions lie at residues 316–366 and 373–392; these read QTLS…GATT and AMSLPGTGSGTSSGGGNTSG. Residues 348–366 show a composition bias toward polar residues; the sequence is PHNSQGTDPQNPSSSGATT. The segment covering 379–390 has biased composition (gly residues); the sequence is TGSGTSSGGGNT.

The protein resides in the virion. Functionally, capsid protein self-assembles to form an icosahedral capsid with a T=1 symmetry, about 22 nm in diameter, and consisting of 60 copies of size variants of the capsid protein which differ in the N-terminus. The capsid encapsulates the genomic ssDNA. Capsid proteins are responsible for the attachment to host cell receptors. This attachment induces virion internalization predominantly through clathrin-dependent endocytosis. This chain is Capsid protein VP1 (VP), found in Junonia coenia densovirus (isolate pBRJ/1990) (JcDNV).